The primary structure comprises 92 residues: Small ribosomal subunit protein uS19c (92 aa).

It belongs to the universal ribosomal protein uS19 family.

It localises to the plastid. It is found in the chloroplast. Protein S19 forms a complex with S13 that binds strongly to the 16S ribosomal RNA. This Phalaenopsis aphrodite subsp. formosana (Moth orchid) protein is Small ribosomal subunit protein uS19c.